The following is a 247-amino-acid chain: tRNA uridine(34) hydroxylase (247 aa).

Residues 124–218 (TKQDVIVIDT…YLEDTQNKNN (95 aa)) enclose the Rhodanese domain. Catalysis depends on C178, which acts as the Cysteine persulfide intermediate.

This sequence belongs to the TrhO family.

The enzyme catalyses uridine(34) in tRNA + AH2 + O2 = 5-hydroxyuridine(34) in tRNA + A + H2O. Functionally, catalyzes oxygen-dependent 5-hydroxyuridine (ho5U) modification at position 34 in tRNAs. In Rickettsia massiliae (strain Mtu5), this protein is tRNA uridine(34) hydroxylase.